We begin with the raw amino-acid sequence, 494 residues long: Cytochrome P450 2B11 (494 aa).

At Ser128 the chain carries Phosphoserine; by PKA. Cys436 lines the heme pocket.

This sequence belongs to the cytochrome P450 family. Requires heme as cofactor.

It is found in the endoplasmic reticulum membrane. The protein resides in the microsome membrane. The catalysed reaction is an organic molecule + reduced [NADPH--hemoprotein reductase] + O2 = an alcohol + oxidized [NADPH--hemoprotein reductase] + H2O + H(+). In terms of biological role, cytochromes P450 are a group of heme-thiolate monooxygenases. In liver microsomes, this enzyme is involved in an NADPH-dependent electron transport pathway. This isozyme seems responsible for metabolism of 2,2',4,4',5,5'-hexachlorobiphenyl. This is Cytochrome P450 2B11 (CYP2B11) from Canis lupus familiaris (Dog).